The primary structure comprises 153 residues: Pheromone-binding protein Gp-9 (153 aa).

The signal sequence occupies residues 1-19; that stretch reads MKTFVLHIFIFALVAFASA. Intrachain disulfides connect Cys-37/Cys-77, Cys-73/Cys-129, and Cys-118/Cys-138.

Belongs to the PBP/GOBP family. In terms of assembly, homodimer.

Its subcellular location is the secreted. Colony queen number, a major feature of social organization, is associated with worker genotype for Gp-9. Colonies are headed by either a single reproductive queen (monogyne form) or multiple queens (polygyne form). Differences in worker Gp-9 genotypes between social forms may cause differences in workers' abilities to recognize queens and regulate their numbers. The sequence is that of Pheromone-binding protein Gp-9 from Solenopsis pusillignis (Fire ant).